Reading from the N-terminus, the 88-residue chain is M-zodatoxin-Lt1a (88 aa).

The first 22 residues, 1-22 (MKYFVVALALAVALVCIAESTA), serve as a signal peptide directing secretion. Positions 23-62 (YDVNEELENELDDLSDAAWLAKAAEDLQALDDFEESEESR) are excised as a propeptide. The Processing quadruplet motif motif lies at 59–62 (EESR).

Post-translationally, cleavage of the propeptide depends on the processing quadruplet motif (XXXR, with at least one of X being E). In terms of tissue distribution, expressed by the venom gland.

The protein resides in the secreted. Its function is as follows. Has antimicrobial activity against Gram-positive bacteria (A.globiformis VKM Ac-1112 (MIC=0.5 uM), and B.subtilis VKM B-501 (MIC=1.0 uM)), Gram-negative bacteria (E.coli DH5-alpha (MIC=1.0 uM), E.coli MH1 (MIC=0.7 uM), and P.aeruginosa PAO1 (MIC=4.1 uM)), and yeasts (P.pastoris GS115 (MIC=17 uM), and S.cerevisiae Y190 (MIC&gt;33 uM)). Has a moderate hemolytic activity against rabbit erythrocytes. Causes paralysis, but is not lethal when injected into insect (M.domestica) larvae. The sequence is that of M-zodatoxin-Lt1a from Lachesana tarabaevi (Spider).